We begin with the raw amino-acid sequence, 355 residues long: NADH-quinone oxidoreductase subunit H (355 aa).

Helical transmembrane passes span 25–45 (IVRI…LILW), 91–111 (WLYL…WAVI), 126–146 (LLYA…AGWA), 170–190 (MGFA…SEIV), 205–225 (FLSW…ISGI), 252–272 (GMAF…ISAL), 290–310 (FIPG…VFIW), and 330–350 (VFLP…MSPL).

It belongs to the complex I subunit 1 family. As to quaternary structure, NDH-1 is composed of 14 different subunits. Subunits NuoA, H, J, K, L, M, N constitute the membrane sector of the complex.

It is found in the cell inner membrane. The enzyme catalyses a quinone + NADH + 5 H(+)(in) = a quinol + NAD(+) + 4 H(+)(out). Its function is as follows. NDH-1 shuttles electrons from NADH, via FMN and iron-sulfur (Fe-S) centers, to quinones in the respiratory chain. The immediate electron acceptor for the enzyme in this species is believed to be ubiquinone. Couples the redox reaction to proton translocation (for every two electrons transferred, four hydrogen ions are translocated across the cytoplasmic membrane), and thus conserves the redox energy in a proton gradient. This subunit may bind ubiquinone. In Burkholderia lata (strain ATCC 17760 / DSM 23089 / LMG 22485 / NCIMB 9086 / R18194 / 383), this protein is NADH-quinone oxidoreductase subunit H.